A 64-amino-acid chain; its full sequence is Long neurotoxin MS5 (64 aa).

Disulfide bonds link C3–C24, C6–C11, C17–C41, C45–C57, and C58–C63.

It belongs to the three-finger toxin family. Ancestral subfamily. As to expression, expressed by the venom gland.

It localises to the secreted. In terms of biological role, produces peripheral paralysis by blocking neuromuscular transmission at the postsynaptic site. Very weak inhibitor of the endogenous nicotinic acetylcholine receptors (nAChR) in the human rhabdomyosarcoma TE 671 cell line. This neurotoxin is lethal to zebrafish by injection at the back of the dorsolateral region, but is not toxic to mice by intraperitoneal injection. The chain is Long neurotoxin MS5 from Micrurus surinamensis (Surinam coral snake).